A 537-amino-acid chain; its full sequence is Berberine bridge enzyme-like 26 (537 aa).

The signal sequence occupies residues 1–27 (MGISKPLPLFSILVLYFSLYTITPTSS). Cys38 and Cys102 are disulfide-bonded. Asn59 carries N-linked (GlcNAc...) asparagine glycosylation. Residues 80–256 (SMPKPGFIFS…LAWKIKLVPV (177 aa)) enclose the FAD-binding PCMH-type domain. Residues 117–181 (HDYEGLSYVS…KVHGFPAGLC (65 aa)) constitute a cross-link (6-(S-cysteinyl)-8alpha-(pros-histidyl)-FAD (His-Cys)). Residue Asn306 is glycosylated (N-linked (GlcNAc...) asparagine).

This sequence belongs to the oxygen-dependent FAD-linked oxidoreductase family. FAD serves as cofactor. The FAD cofactor is bound via a bicovalent 6-S-cysteinyl, 8alpha-N1-histidyl FAD linkage.

It localises to the secreted. The protein resides in the cell wall. This chain is Berberine bridge enzyme-like 26, found in Arabidopsis thaliana (Mouse-ear cress).